The primary structure comprises 119 residues: Large ribosomal subunit protein bL19 (119 aa).

Belongs to the bacterial ribosomal protein bL19 family.

Functionally, this protein is located at the 30S-50S ribosomal subunit interface and may play a role in the structure and function of the aminoacyl-tRNA binding site. This is Large ribosomal subunit protein bL19 from Pseudarthrobacter chlorophenolicus (strain ATCC 700700 / DSM 12829 / CIP 107037 / JCM 12360 / KCTC 9906 / NCIMB 13794 / A6) (Arthrobacter chlorophenolicus).